A 259-amino-acid chain; its full sequence is DNA-directed RNA polymerase 30 kDa polypeptide (259 aa).

Residues Y155–K195 form a TFIIS-type zinc finger. The Zn(2+) site is built by C159, C162, C187, and C190. The disordered stretch occupies residues E220–E259. Pro residues predominate over residues N226 to A236.

This sequence belongs to the poxviridae DNA-directed RNA polymerase 30 kDa subunit family. The DNA-dependent RNA polymerase (vRNAP) consists of eight subunits encoded by early viral genes and termed according to their apparent molecular masses Rpo147, Rpo132, Rpo35, Rpo30, Rpo22, Rpo19, Rpo18, and Rpo7. The same holoenzyme, with the addition of the transcription-specificity factor RAP94, is used for early gene expression.

It localises to the virion. The protein localises to the host cytoplasm. It carries out the reaction RNA(n) + a ribonucleoside 5'-triphosphate = RNA(n+1) + diphosphate. Functionally, part of the DNA-dependent RNA polymerase which catalyzes the transcription of viral DNA into RNA using the four ribonucleoside triphosphates as substrates. Responsible for the transcription of early, intermediate and late genes. DNA-dependent RNA polymerase associates with the early transcription factor (ETF), itself composed of OPG118 and OPG134, thereby allowing the early genes transcription. Late transcription, and probably also intermediate transcription, require newly synthesized RNA polymerase. This is DNA-directed RNA polymerase 30 kDa polypeptide (OPG066) from Bos taurus (Bovine).